A 493-amino-acid polypeptide reads, in one-letter code: Ribosomal protein uS12 methylthiotransferase RimO (493 aa).

Residues 5 to 121 (RTVALVTLGC…ISDRLQTILN (117 aa)) enclose the MTTase N-terminal domain. 3 residues coordinate [4Fe-4S] cluster: cysteine 14, cysteine 50, and cysteine 84. Positions 153 to 177 (LPGHGPTDLPEGVAPASGPRAPLRR) are disordered. The 232-residue stretch at 179 to 410 (LDGSPVASVK…RLAEELVSQR (232 aa)) folds into the Radical SAM core domain. Residues cysteine 193, cysteine 197, and cysteine 200 each coordinate [4Fe-4S] cluster. The TRAM domain occupies 412–482 (DERVGATVRV…GVDLVAEPLL (71 aa)).

It belongs to the methylthiotransferase family. RimO subfamily. It depends on [4Fe-4S] cluster as a cofactor.

It localises to the cytoplasm. The catalysed reaction is L-aspartate(89)-[ribosomal protein uS12]-hydrogen + (sulfur carrier)-SH + AH2 + 2 S-adenosyl-L-methionine = 3-methylsulfanyl-L-aspartate(89)-[ribosomal protein uS12]-hydrogen + (sulfur carrier)-H + 5'-deoxyadenosine + L-methionine + A + S-adenosyl-L-homocysteine + 2 H(+). In terms of biological role, catalyzes the methylthiolation of an aspartic acid residue of ribosomal protein uS12. This Streptomyces coelicolor (strain ATCC BAA-471 / A3(2) / M145) protein is Ribosomal protein uS12 methylthiotransferase RimO.